The primary structure comprises 275 residues: Galaxin-2 (275 aa).

Residues 1 to 20 (MTRFTSIGLCAVLLFNVCSC) form the signal peptide.

In terms of tissue distribution, component of the acid-insoluble and acid-soluble organic matrix of the aragonitic skeleton (at protein level).

It localises to the secreted. The sequence is that of Galaxin-2 from Acropora millepora (Staghorn coral).